Reading from the N-terminus, the 186-residue chain is Single-stranded DNA-binding protein 1 (186 aa).

An SSB domain is found at Met1 to Leu108. Residues Thr119–Phe186 form a disordered region. The span at Ser175–Phe186 shows a compositional bias: acidic residues.

Homotetramer.

The sequence is that of Single-stranded DNA-binding protein 1 (ssb1) from Tropheryma whipplei (strain Twist) (Whipple's bacillus).